The chain runs to 82 residues: Large ribosomal subunit protein uL23 (82 aa).

Belongs to the universal ribosomal protein uL23 family. As to quaternary structure, part of the 50S ribosomal subunit. Contacts protein L29.

Binds to 23S rRNA. One of the proteins that surrounds the polypeptide exit tunnel on the outside of the ribosome. The chain is Large ribosomal subunit protein uL23 from Picrophilus torridus (strain ATCC 700027 / DSM 9790 / JCM 10055 / NBRC 100828 / KAW 2/3).